We begin with the raw amino-acid sequence, 248 residues long: Granulin (248 aa).

It belongs to the polyhedrin family.

Functionally, component of the virus occlusion bodies, which are large proteinaceous structures, that protect the virus from the outside environment for extended periods until they are ingested by insect larvae. The sequence is that of Granulin from Xestia c-nigrum granulosis virus (XnGV).